Consider the following 300-residue polypeptide: Lysenin-related protein 3 (300 aa).

Residues 12-35 (EEIEVDVVAVWKEGYVYENRGDTS) are N-terminal cap domain. The interval 36–109 (VEQKITMTKG…SQVIEHTVTI (74 aa)) is beta-hairpin domain. An N-terminal cap domain region spans residues 110–158 (PPTSKFTRWKLNADVGGTDIEYMYLIDEVTPISVTQTIPQVIRSRAKIL). Residues 159–299 (VGRQIHLGTT…EDKWILEVVN (141 aa)) form a C-terminal receptor-binding domain region. 4 residues coordinate an N-(acyl)-sphingosylphosphocholine: lysine 187, serine 229, tyrosine 235, and tyrosine 284. Cysteines 274 and 285 form a disulfide.

It belongs to the lysenin family. Binds to sphingomyelin as a monomer by using its C-terminal domain. Forms a nonamer when sphingomyelin/LRP-3 ratio is lower than ca 500. Oligomerization, but not binding, is influenced by the fluidity of sphingomyelin. Expressed by coelomocytes.

The protein localises to the secreted. Its subcellular location is the target cell membrane. Its function is as follows. Pore-forming toxin that specifically binds sphingomyelin in the plasma membrane of various cells. Has antibacterial and hemolytic activity. The polypeptide is Lysenin-related protein 3 (Eisenia fetida (Red wiggler worm)).